A 425-amino-acid chain; its full sequence is uncharacterized protein (425 aa).

This is an uncharacterized protein from Acidianus sp. F28 (AFV-2).